A 541-amino-acid chain; its full sequence is Chaperonin GroEL 2 (541 aa).

Residues threonine 30–proline 33, lysine 51, aspartate 87–threonine 91, glycine 414, and aspartate 495 each bind ATP.

It belongs to the chaperonin (HSP60) family. Forms a cylinder of 14 subunits composed of two heptameric rings stacked back-to-back. Interacts with the co-chaperonin GroES.

It localises to the cytoplasm. It catalyses the reaction ATP + H2O + a folded polypeptide = ADP + phosphate + an unfolded polypeptide.. In terms of biological role, together with its co-chaperonin GroES, plays an essential role in assisting protein folding. The GroEL-GroES system forms a nano-cage that allows encapsulation of the non-native substrate proteins and provides a physical environment optimized to promote and accelerate protein folding. The sequence is that of Chaperonin GroEL 2 from Cereibacter sphaeroides (Rhodobacter sphaeroides).